A 349-amino-acid chain; its full sequence is UPF0324 inner membrane protein YeiH (349 aa).

Topologically, residues 1-12 (MTNITLQKQHRT) are periplasmic. Residues 13–32 (LWHFIPGLALSAVITGVALW) form a helical membrane-spanning segment. At 33 to 35 (GGS) the chain is on the cytoplasmic side. The chain crosses the membrane as a helical span at residues 36–58 (IPAVAGAGFSALTLAILLGMVLG). Residues 59–99 (NTIYPHIWKSCDGGVLFAKQYLLRLGIILYGFRLTFSQIAD) lie on the Periplasmic side of the membrane. A helical transmembrane segment spans residues 100–122 (VGISGIIIDVLTLSSTFLLACFL). Residues 123 to 131 (GQKVFGLDK) lie on the Cytoplasmic side of the membrane. A helical membrane pass occupies residues 132 to 151 (HTSWLIGAGSSICGAAAVLA). At 152–162 (TEPVVKAEASK) the chain is on the periplasmic side. A helical transmembrane segment spans residues 163–185 (VTVAVATVVIFGTVAIFLYPAIY). At 186 to 261 (PLMSQWFSPE…SGANSGEKSK (76 aa)) the chain is on the cytoplasmic side. Residues 262-283 (ITIPWFAILFIVVAIFNSFHLL) form a helical membrane-spanning segment. Topologically, residues 284 to 289 (PQSVVN) are periplasmic. The helical transmembrane segment at 290-312 (MLVTLDTFLLAMAMAALGLTTHV) threads the bilayer. Over 313-321 (SALKKAGAK) the chain is Cytoplasmic. A helical membrane pass occupies residues 322-344 (PLLMALVLFAWLIVGGGAINYVI). The Periplasmic portion of the chain corresponds to 345–349 (QSVIA).

Belongs to the UPF0324 family.

The protein resides in the cell inner membrane. This Escherichia coli O157:H7 protein is UPF0324 inner membrane protein YeiH (yeiH).